A 193-amino-acid chain; its full sequence is Holliday junction branch migration complex subunit RuvA (193 aa).

The domain I stretch occupies residues 1 to 64; it reads MIGRIQGTLV…EDAQQLFGFA (64 aa). The domain II stretch occupies residues 65–139; that stretch reads TEIEREAFRQ…GKLAPDLGIT (75 aa). Residues 139–143 are flexible linker; sequence TGGKP. The segment at 144 to 193 is domain III; sequence QAIEATSEVLQALLSLGYSEKEALLALKQIPPETSVSDGIRMGLKYLSKP.

It belongs to the RuvA family. As to quaternary structure, homotetramer. Forms an RuvA(8)-RuvB(12)-Holliday junction (HJ) complex. HJ DNA is sandwiched between 2 RuvA tetramers; dsDNA enters through RuvA and exits via RuvB. An RuvB hexamer assembles on each DNA strand where it exits the tetramer. Each RuvB hexamer is contacted by two RuvA subunits (via domain III) on 2 adjacent RuvB subunits; this complex drives branch migration. In the full resolvosome a probable DNA-RuvA(4)-RuvB(12)-RuvC(2) complex forms which resolves the HJ.

It is found in the cytoplasm. Functionally, the RuvA-RuvB-RuvC complex processes Holliday junction (HJ) DNA during genetic recombination and DNA repair, while the RuvA-RuvB complex plays an important role in the rescue of blocked DNA replication forks via replication fork reversal (RFR). RuvA specifically binds to HJ cruciform DNA, conferring on it an open structure. The RuvB hexamer acts as an ATP-dependent pump, pulling dsDNA into and through the RuvAB complex. HJ branch migration allows RuvC to scan DNA until it finds its consensus sequence, where it cleaves and resolves the cruciform DNA. The sequence is that of Holliday junction branch migration complex subunit RuvA from Polynucleobacter asymbioticus (strain DSM 18221 / CIP 109841 / QLW-P1DMWA-1) (Polynucleobacter necessarius subsp. asymbioticus).